We begin with the raw amino-acid sequence, 158 residues long: MPRERGEKVVATNRKARHDYTIESTYEAGLVLTGTEVKSLRQGRASLVDGYAFVDAGEAWLDAVHIPEYNQGTWNNHPVRRKRKLLLHKEQILKIHSKVKEGGYTVVPLQLYFVDGRAKVELAIAKGKKEYDKRQTLRERQDKREADRAMSSHRRLGE.

The interval 131–158 is disordered; the sequence is YDKRQTLRERQDKREADRAMSSHRRLGE.

This sequence belongs to the SmpB family.

The protein localises to the cytoplasm. In terms of biological role, required for rescue of stalled ribosomes mediated by trans-translation. Binds to transfer-messenger RNA (tmRNA), required for stable association of tmRNA with ribosomes. tmRNA and SmpB together mimic tRNA shape, replacing the anticodon stem-loop with SmpB. tmRNA is encoded by the ssrA gene; the 2 termini fold to resemble tRNA(Ala) and it encodes a 'tag peptide', a short internal open reading frame. During trans-translation Ala-aminoacylated tmRNA acts like a tRNA, entering the A-site of stalled ribosomes, displacing the stalled mRNA. The ribosome then switches to translate the ORF on the tmRNA; the nascent peptide is terminated with the 'tag peptide' encoded by the tmRNA and targeted for degradation. The ribosome is freed to recommence translation, which seems to be the essential function of trans-translation. The sequence is that of SsrA-binding protein from Clavibacter michiganensis subsp. michiganensis (strain NCPPB 382).